The primary structure comprises 642 residues: Threonine--tRNA ligase (642 aa).

The 61-residue stretch at 1–61 (MPVITLPDGS…EHDAQIAIIT (61 aa)) folds into the TGS domain. The interval 243 to 534 (DHRKIGKQLD…LTEEYAGFYP (292 aa)) is catalytic. Cysteine 334, histidine 385, and histidine 511 together coordinate Zn(2+).

Belongs to the class-II aminoacyl-tRNA synthetase family. Homodimer. It depends on Zn(2+) as a cofactor.

It is found in the cytoplasm. It carries out the reaction tRNA(Thr) + L-threonine + ATP = L-threonyl-tRNA(Thr) + AMP + diphosphate + H(+). Its function is as follows. Catalyzes the attachment of threonine to tRNA(Thr) in a two-step reaction: L-threonine is first activated by ATP to form Thr-AMP and then transferred to the acceptor end of tRNA(Thr). Also edits incorrectly charged L-seryl-tRNA(Thr). This chain is Threonine--tRNA ligase, found in Sodalis glossinidius (strain morsitans).